Here is a 144-residue protein sequence, read N- to C-terminus: Large ribosomal subunit protein eL27 (144 aa).

This sequence belongs to the eukaryotic ribosomal protein eL27 family.

It localises to the cytoplasm. The chain is Large ribosomal subunit protein eL27 (RPL27) from Tetrahymena thermophila.